A 331-amino-acid polypeptide reads, in one-letter code: Neurogenic differentiation factor 4 (331 aa).

The tract at residues 1 to 80 is disordered; that stretch reads MSKTFVKSKE…GPKKKKMTKA (80 aa). The span at 52-64 shows a compositional bias: acidic residues; the sequence is DSIEEEEEEEEDG. The span at 67 to 79 shows a compositional bias: basic residues; the sequence is PKRRGPKKKKMTK. Residues 87-139 enclose the bHLH domain; sequence ARRVKANARERTRMHGLNDALDNLRRVMPCYSKTQKLSKIETLRLARNYIWAL. Residues 246 to 265 are disordered; the sequence is TPPYEGPLTPPLSISGNFSL.

In terms of assembly, efficient DNA binding requires dimerization with another bHLH protein. Post-translationally, serine or threonine phosphorylation within the basic region may regulate neurogenic activity.

It is found in the nucleus. Functionally, probably acts as a transcriptional activator. Mediates neuronal differentiation. Required for the regulation of amacrine cell fate specification in the retina. The polypeptide is Neurogenic differentiation factor 4 (NEUROD4) (Homo sapiens (Human)).